The chain runs to 621 residues: 5-aminolevulinate synthase, mitochondrial (621 aa).

The interval 76-95 is disordered; that stretch reads DAKGSLAGRPVHHKAATEST. Substrate is bound by residues arginine 122 and serine 234. Serine 286, histidine 314, and threonine 359 together coordinate pyridoxal 5'-phosphate. Lysine 362 is an active-site residue. Lysine 362 carries the N6-(pyridoxal phosphate)lysine modification. 2 residues coordinate pyridoxal 5'-phosphate: threonine 391 and threonine 392. Position 477 (threonine 477) interacts with substrate.

The protein belongs to the class-II pyridoxal-phosphate-dependent aminotransferase family. Homodimer. Pyridoxal 5'-phosphate serves as cofactor.

Its subcellular location is the mitochondrion matrix. The catalysed reaction is succinyl-CoA + glycine + H(+) = 5-aminolevulinate + CO2 + CoA. It participates in porphyrin-containing compound metabolism; protoporphyrin-IX biosynthesis; 5-aminolevulinate from glycine: step 1/1. In terms of biological role, catalyzes the synthesis of 5-aminolevulinate (ALA) from succinyl-CoA and glycine, the first and rate-limiting step in heme biosynthesis. The chain is 5-aminolevulinate synthase, mitochondrial (hem1) from Agaricus bisporus (White button mushroom).